The chain runs to 328 residues: Phosphate acetyltransferase (328 aa).

Belongs to the phosphate acetyltransferase and butyryltransferase family.

The protein resides in the cytoplasm. The catalysed reaction is acetyl-CoA + phosphate = acetyl phosphate + CoA. It functions in the pathway metabolic intermediate biosynthesis; acetyl-CoA biosynthesis; acetyl-CoA from acetate: step 2/2. In Staphylococcus aureus (strain MSSA476), this protein is Phosphate acetyltransferase (pta).